The primary structure comprises 708 residues: Protein psiF (708 aa).

The N-terminal stretch at 1-19 (MKYLFIAIILILYCSFTKA) is a signal peptide. The Extracellular segment spans residues 20–643 (DQKKFLVNMY…QSTAVKVGVG (624 aa)). N-linked (GlcNAc...) asparagine glycosylation is found at N78, N116, N222, N317, N318, N371, N498, and N600. Positions 103 to 263 (TQTAGSQNYY…YDYCGICNGK (161 aa)) constitute a PA14 domain. A helical transmembrane segment spans residues 644-664 (IGAAAAAGIAIGGAVAAGLAI). The Cytoplasmic segment spans residues 665–708 (FGGKKAYDTWKTSRGNVMTGSQSNPLYTQNQNNGNNPLYSAPAE). The span at 682 to 702 (MTGSQSNPLYTQNQNNGNNPL) shows a compositional bias: polar residues. The disordered stretch occupies residues 682–708 (MTGSQSNPLYTQNQNNGNNPLYSAPAE).

The protein belongs to the prespore-cell-inducing factor family. As to quaternary structure, forms a complex with dicB.

It is found in the membrane. Its subcellular location is the secreted. Its function is as follows. Acts as a quorum sensing protein regulating discoidin gene expression during growth and development. D.discoideum is a single-celled amoebae and switches to multicellular development when food becomes limited. As the growing cells reach a high density, they begin expressing discoidin genes. The ability of psiF/dicA to induce discoidin gene expression when present in conditioned medium, suggests that it allows cells to sense their local density. The chain is Protein psiF (psiF) from Dictyostelium discoideum (Social amoeba).